Consider the following 31-residue polypeptide: Cytochrome b6-f complex subunit 6 (31 aa).

The chain crosses the membrane as a helical span at residues 4–24 (ITSYFGFLLAVLIITSSLFIG).

It belongs to the PetL family. The 4 large subunits of the cytochrome b6-f complex are cytochrome b6, subunit IV (17 kDa polypeptide, PetD), cytochrome f and the Rieske protein, while the 4 small subunits are PetG, PetL, PetM and PetN. The complex functions as a dimer.

It is found in the plastid. Its subcellular location is the chloroplast thylakoid membrane. In terms of biological role, component of the cytochrome b6-f complex, which mediates electron transfer between photosystem II (PSII) and photosystem I (PSI), cyclic electron flow around PSI, and state transitions. PetL is important for photoautotrophic growth as well as for electron transfer efficiency and stability of the cytochrome b6-f complex. The polypeptide is Cytochrome b6-f complex subunit 6 (Phaseolus vulgaris (Kidney bean)).